A 103-amino-acid polypeptide reads, in one-letter code: N(4)-acetylcytidine amidohydrolase (103 aa).

In terms of domain architecture, ASCH spans 6 to 101 (ITFFQRFQDD…QTQFYVIEFK (96 aa)). Lysine 21 (proton acceptor) is an active-site residue. Threonine 24 serves as the catalytic Nucleophile. The Proton donor role is filled by glutamate 74.

Belongs to the N(4)-acetylcytidine amidohydrolase family.

It carries out the reaction N(4)-acetylcytidine + H2O = cytidine + acetate + H(+). It catalyses the reaction N(4)-acetyl-2'-deoxycytidine + H2O = 2'-deoxycytidine + acetate + H(+). The enzyme catalyses N(4)-acetylcytosine + H2O = cytosine + acetate + H(+). In terms of biological role, catalyzes the hydrolysis of N(4)-acetylcytidine (ac4C). This Escherichia coli (strain SE11) protein is N(4)-acetylcytidine amidohydrolase (yqfB).